The following is a 212-amino-acid chain: Small ribosomal subunit protein uS5 (212 aa).

An S5 DRBM domain is found at 48–111 (LDDEVLDINM…EVAKLNIIDV (64 aa)).

The protein belongs to the universal ribosomal protein uS5 family. Part of the 30S ribosomal subunit. Contacts protein S4.

With S4 and S12 plays an important role in translational accuracy. The sequence is that of Small ribosomal subunit protein uS5 from Halobacterium salinarum (strain ATCC 700922 / JCM 11081 / NRC-1) (Halobacterium halobium).